The sequence spans 478 residues: Proline--tRNA ligase (478 aa).

Belongs to the class-II aminoacyl-tRNA synthetase family. ProS type 3 subfamily. In terms of assembly, homodimer.

Its subcellular location is the cytoplasm. The catalysed reaction is tRNA(Pro) + L-proline + ATP = L-prolyl-tRNA(Pro) + AMP + diphosphate. In terms of biological role, catalyzes the attachment of proline to tRNA(Pro) in a two-step reaction: proline is first activated by ATP to form Pro-AMP and then transferred to the acceptor end of tRNA(Pro). The sequence is that of Proline--tRNA ligase from Oceanobacillus iheyensis (strain DSM 14371 / CIP 107618 / JCM 11309 / KCTC 3954 / HTE831).